A 91-amino-acid chain; its full sequence is MTRSVKKGPFIDAHLLKKVEAAVQTKDKKPIKTWSRRSTILPDFIGLTIAVHNGRQHVPVYVTENMVGHKLGEFALTRTFKGHAADKKAKR.

It belongs to the universal ribosomal protein uS19 family.

Protein S19 forms a complex with S13 that binds strongly to the 16S ribosomal RNA. This chain is Small ribosomal subunit protein uS19, found in Ralstonia pickettii (strain 12J).